A 484-amino-acid polypeptide reads, in one-letter code: Adenylosuccinate synthetase, chloroplastic (484 aa).

A chloroplast-targeting transit peptide spans 1 to 44; sequence MSLSTLSHPAAAAAGSGKSLFPAGPAAQSVHFPKARLPVPAAVS. GTP is bound by residues 71–77 and 99–101; these read GDEGKGK and GHT. D72 serves as the catalytic Proton acceptor. Mg(2+)-binding residues include D72 and G99. IMP contacts are provided by residues 72–75, 97–100, T189, R203, Q283, T298, and R362; these read DEGK and NAGH. H100 acts as the Proton donor in catalysis. Position 358–364 (358–364) interacts with substrate; it reads TTTGRPR. Residues R364, 390–392, and 473–475 contribute to the GTP site; these read KLD and GVG.

This sequence belongs to the adenylosuccinate synthetase family. Homodimer. Mg(2+) serves as cofactor.

Its subcellular location is the plastid. The protein resides in the chloroplast. It carries out the reaction IMP + L-aspartate + GTP = N(6)-(1,2-dicarboxyethyl)-AMP + GDP + phosphate + 2 H(+). It functions in the pathway purine metabolism; AMP biosynthesis via de novo pathway; AMP from IMP: step 1/2. Its function is as follows. Plays an important role in the de novo pathway and in the salvage pathway of purine nucleotide biosynthesis. Catalyzes the first committed step in the biosynthesis of AMP from IMP. This chain is Adenylosuccinate synthetase, chloroplastic, found in Zea mays (Maize).